The chain runs to 680 residues: DNA-directed RNA polymerase subunit beta' (680 aa).

Residues cysteine 69, cysteine 71, cysteine 87, and cysteine 90 each contribute to the Zn(2+) site. Residues aspartate 489, aspartate 491, and aspartate 493 each contribute to the Mg(2+) site.

Belongs to the RNA polymerase beta' chain family. RpoC1 subfamily. In terms of assembly, in plastids the minimal PEP RNA polymerase catalytic core is composed of four subunits: alpha, beta, beta', and beta''. When a (nuclear-encoded) sigma factor is associated with the core the holoenzyme is formed, which can initiate transcription. The cofactor is Mg(2+). It depends on Zn(2+) as a cofactor.

Its subcellular location is the plastid. The protein resides in the chloroplast. The catalysed reaction is RNA(n) + a ribonucleoside 5'-triphosphate = RNA(n+1) + diphosphate. In terms of biological role, DNA-dependent RNA polymerase catalyzes the transcription of DNA into RNA using the four ribonucleoside triphosphates as substrates. The sequence is that of DNA-directed RNA polymerase subunit beta' from Lepidium virginicum (Virginia pepperweed).